The primary structure comprises 259 residues: Secretion system apparatus protein SsaT (259 aa).

6 helical membrane-spanning segments follow: residues 9 to 29 (LIALAVAFIRPLSLSLLLPLL), 35 to 55 (GAALLRNGVLMSLTFPILPII), 78 to 98 (VIIGFSIGFCAAVPFWAVDMA), 127 to 147 (LLFSQFLCVIFFISGGMEFIL), 185 to 205 (ISFSLPAIICMVLADLALGLL), and 214 to 234 (VFFFSMPLKSILVLLTLLISF).

Belongs to the FliR/MopE/SpaR family.

It is found in the cell membrane. In terms of biological role, part of a type III secretion system. This Salmonella typhimurium (strain LT2 / SGSC1412 / ATCC 700720) protein is Secretion system apparatus protein SsaT (ssaT).